The following is a 203-amino-acid chain: LexA repressor (203 aa).

The H-T-H motif DNA-binding region spans 32–52; the sequence is RAEICTAFGFRSPNAAETHLR. Active-site for autocatalytic cleavage activity residues include S121 and K158.

It belongs to the peptidase S24 family. Homodimer.

The catalysed reaction is Hydrolysis of Ala-|-Gly bond in repressor LexA.. Functionally, represses a number of genes involved in the response to DNA damage (SOS response), including recA and lexA. In the presence of single-stranded DNA, RecA interacts with LexA causing an autocatalytic cleavage which disrupts the DNA-binding part of LexA, leading to derepression of the SOS regulon and eventually DNA repair. The chain is LexA repressor from Aromatoleum aromaticum (strain DSM 19018 / LMG 30748 / EbN1) (Azoarcus sp. (strain EbN1)).